We begin with the raw amino-acid sequence, 335 residues long: Putative zinc metalloprotease CPE1693 (335 aa).

Position 17 (His-17) interacts with Zn(2+). The active site involves Glu-18. A Zn(2+)-binding site is contributed by His-21. 3 helical membrane passes run 88–110 (ILVMGAGAFMNYVLALIIFIGLA), 262–284 (LLWFMAFLSVQLAVFNLLPFPAL), and 312–334 (TVGFMLLMGLMVLVTIKDIIFPI). The 79-residue stretch at 96 to 174 (FMNYVLALII…PVELEIKRGN (79 aa)) folds into the PDZ domain.

This sequence belongs to the peptidase M50B family. The cofactor is Zn(2+).

It is found in the cell membrane. The protein is Putative zinc metalloprotease CPE1693 of Clostridium perfringens (strain 13 / Type A).